The sequence spans 348 residues: Methylthioribose-1-phosphate isomerase (348 aa).

Substrate is bound by residues 48-50, Arg-90, and Gln-195; that span reads RGA. Asp-236 functions as the Proton donor in the catalytic mechanism. 246–247 is a binding site for substrate; it reads NK.

The protein belongs to the eIF-2B alpha/beta/delta subunits family. MtnA subfamily.

The enzyme catalyses 5-(methylsulfanyl)-alpha-D-ribose 1-phosphate = 5-(methylsulfanyl)-D-ribulose 1-phosphate. It functions in the pathway amino-acid biosynthesis; L-methionine biosynthesis via salvage pathway; L-methionine from S-methyl-5-thio-alpha-D-ribose 1-phosphate: step 1/6. Catalyzes the interconversion of methylthioribose-1-phosphate (MTR-1-P) into methylthioribulose-1-phosphate (MTRu-1-P). This Exiguobacterium sibiricum (strain DSM 17290 / CCUG 55495 / CIP 109462 / JCM 13490 / 255-15) protein is Methylthioribose-1-phosphate isomerase.